The following is a 783-amino-acid chain: Spindle pole body protein ppc89 (783 aa).

The residue at position 157 (S157) is a Phosphoserine. Disordered regions lie at residues 180 to 216, 434 to 458, 471 to 504, and 528 to 610; these read FDSPTEALPPKPTTPWRRNGFRSKTTPNLNSGKETPS, KESNVTSKIKSTAENSSKPLSMNEA, ENKSGANTKEMSNGTETAKENCSPQQDSTSPTSG, and LSQS…MKGN. Composition is skewed to polar residues over residues 201-216, 437-453, and 474-504; these read RSKTTPNLNSGKETPS, NVTSKIKSTAENSSKPL, and SGANTKEMSNGTETAKENCSPQQDSTSPTSG. Over residues 536–551 the composition is skewed to basic residues; it reads PVKHRKRRPKSKRRIT. A compositionally biased stretch (acidic residues) spans 566 to 590; that stretch reads ESDEGSEEISLDSEYSDILSDDGDF.

The protein localises to the cytoplasm. It localises to the cytoskeleton. It is found in the microtubule organizing center. Its subcellular location is the spindle pole body. Has a role in meiosis. The protein is Spindle pole body protein ppc89 (ppc89) of Schizosaccharomyces pombe (strain 972 / ATCC 24843) (Fission yeast).